We begin with the raw amino-acid sequence, 287 residues long: Thioredoxin-related transmembrane protein 2 (287 aa).

A signal peptide spans 1–35 (MAVLAPLLAFLYAVPGLLRWVSQPYYLLSALLSVS). Residues 36 to 112 (FLLVRKVPPV…ILFFRLDLRM (77 aa)) are Extracellular-facing. Residues 113-133 (GLLYITLCIVFLMTCKPPLYL) form a helical membrane-spanning segment. Over 134-287 (GPEHIKYFSD…NEYNDSKKDQ (154 aa)) the chain is Cytoplasmic. The Thioredoxin domain occupies 135–269 (PEHIKYFSDK…LYQKAKKIRK (135 aa)). A Di-lysine motif motif is present at residues 284–287 (KKDQ).

As to quaternary structure, monomer. Homodimer; disulfide-linked. Occurs in both reduced and oxidized monomeric form. Oxidative conditions increase homodimerization.

The protein localises to the endoplasmic reticulum membrane. It localises to the mitochondrion membrane. Functionally, endoplasmic reticulum and mitochondria-associated protein that probably functions as a regulator of cellular redox state and thereby regulates protein post-translational modification, protein folding and mitochondrial activity. This is Thioredoxin-related transmembrane protein 2 (tmx2) from Xenopus tropicalis (Western clawed frog).